Reading from the N-terminus, the 160-residue chain is 2-C-methyl-D-erythritol 2,4-cyclodiphosphate synthase (160 aa).

A divalent metal cation contacts are provided by Asp-10 and His-12. Residues 10-12 (DVH) and 36-37 (HS) each bind 4-CDP-2-C-methyl-D-erythritol 2-phosphate. His-44 lines the a divalent metal cation pocket. 4-CDP-2-C-methyl-D-erythritol 2-phosphate contacts are provided by residues 58 to 60 (DIG), 63 to 67 (FPDTD), 102 to 108 (AQAPKML), 134 to 137 (TTTE), Phe-141, and Arg-144.

Belongs to the IspF family. Homotrimer. A divalent metal cation serves as cofactor.

The catalysed reaction is 4-CDP-2-C-methyl-D-erythritol 2-phosphate = 2-C-methyl-D-erythritol 2,4-cyclic diphosphate + CMP. Its pathway is isoprenoid biosynthesis; isopentenyl diphosphate biosynthesis via DXP pathway; isopentenyl diphosphate from 1-deoxy-D-xylulose 5-phosphate: step 4/6. Functionally, involved in the biosynthesis of isopentenyl diphosphate (IPP) and dimethylallyl diphosphate (DMAPP), two major building blocks of isoprenoid compounds. Catalyzes the conversion of 4-diphosphocytidyl-2-C-methyl-D-erythritol 2-phosphate (CDP-ME2P) to 2-C-methyl-D-erythritol 2,4-cyclodiphosphate (ME-CPP) with a corresponding release of cytidine 5-monophosphate (CMP). The chain is 2-C-methyl-D-erythritol 2,4-cyclodiphosphate synthase from Shewanella amazonensis (strain ATCC BAA-1098 / SB2B).